The sequence spans 295 residues: Polyadenylate-binding protein 2-B (295 aa).

The disordered stretch occupies residues Met1–Gln102. Composition is skewed to gly residues over residues Leu19–Asp31 and Gly71–Gly81. Residues Glu83–Gly96 show a composition bias toward acidic residues. The stretch at Asp106–Ser140 forms a coiled coil. The interval Asn145–Tyr295 is necessary for homooligomerization. Residues Arg162–Thr239 enclose the RRM domain.

As to quaternary structure, monomer and homooligomer. Binds RNA as a monomer and oligomerizes when bound to poly(A).

It is found in the nucleus. Its subcellular location is the cytoplasm. In terms of biological role, involved in the 3'-end formation of mRNA precursors (pre-mRNA) by the addition of a poly(A) tail of 200-250 nt to the upstream cleavage product. Stimulates poly(A) polymerase (PAPOLA) conferring processivity on the poly(A) tail elongation reaction and also controls the poly(A) tail length. Increases the affinity of poly(A) polymerase for RNA. Binds to poly(A) and to poly(G) with high affinity. May protect the poly(A) tail from degradation. The polypeptide is Polyadenylate-binding protein 2-B (pabpn1-b) (Xenopus laevis (African clawed frog)).